The sequence spans 163 residues: uncharacterized protein (163 aa).

Residues 11 to 31 (LSWFLLLVVVILIFFLLLSCL) traverse the membrane as a helical segment.

Its subcellular location is the membrane. This is an uncharacterized protein from Saccharomyces cerevisiae (strain ATCC 204508 / S288c) (Baker's yeast).